The following is a 238-amino-acid chain: Probable transcriptional regulatory protein VS_II1504 (238 aa).

This sequence belongs to the TACO1 family.

Its subcellular location is the cytoplasm. This is Probable transcriptional regulatory protein VS_II1504 from Vibrio atlanticus (strain LGP32) (Vibrio splendidus (strain Mel32)).